We begin with the raw amino-acid sequence, 370 residues long: Putative glutamate--cysteine ligase 2 (370 aa).

It belongs to the glutamate--cysteine ligase type 2 family. YbdK subfamily.

It catalyses the reaction L-cysteine + L-glutamate + ATP = gamma-L-glutamyl-L-cysteine + ADP + phosphate + H(+). Its function is as follows. ATP-dependent carboxylate-amine ligase which exhibits weak glutamate--cysteine ligase activity. This Methylibium petroleiphilum (strain ATCC BAA-1232 / LMG 22953 / PM1) protein is Putative glutamate--cysteine ligase 2.